The primary structure comprises 109 residues: Large ribosomal subunit protein uL24 (109 aa).

It belongs to the universal ribosomal protein uL24 family. In terms of assembly, part of the 50S ribosomal subunit.

Its function is as follows. One of two assembly initiator proteins, it binds directly to the 5'-end of the 23S rRNA, where it nucleates assembly of the 50S subunit. One of the proteins that surrounds the polypeptide exit tunnel on the outside of the subunit. This is Large ribosomal subunit protein uL24 from Rickettsia massiliae (strain Mtu5).